Here is a 499-residue protein sequence, read N- to C-terminus: MIKRALISVFDKTGILDLAKFLESRDVEIISTGGTYKHLKENGVKVIDIEEVTGFPEMLDGRVKTLNPLIHGGILAIRDNEEHMKVIEEKGINPIDMVVVNLYPFFNKVEENLSFDEKVEFIDIGGPTMIRAAAKNFKDVVVLTDTKDYENVIDEIKENDQVNIKTRKKLAGKVFNLMSAYDAAISNFLLEEEYPEYLTLSYKKNIDLRYGENPHQTAAYYTSTVGKYPMKNFEKLNGKELSYNNIKDMDIAWKTVCEFEEVACCALKHNTPCGVAIGDTVQEVYTKAYECDLISIFGGIVAFNRKVDKETAENLAKIFLEIVVAPDFDEDALEVLKNKKNLRVIKCEEKSTEGKDMAKVDGGILVQKSDNKLLEDTKVVTEKSPTEQEMKDLIFGMKVVKYVKSNAIVVVKDGMAKGIGGGQVNRIWAAKEALDRAGDGVVLASDAFFPFGDVAEEAAKWGIKAIIQPGGSIRDEESIKVCNEKGISMVFTGIRHFKH.

Positions 1 to 144 constitute an MGS-like domain; that stretch reads MIKRALISVF…KNFKDVVVLT (144 aa).

The protein belongs to the PurH family.

It carries out the reaction (6R)-10-formyltetrahydrofolate + 5-amino-1-(5-phospho-beta-D-ribosyl)imidazole-4-carboxamide = 5-formamido-1-(5-phospho-D-ribosyl)imidazole-4-carboxamide + (6S)-5,6,7,8-tetrahydrofolate. The enzyme catalyses IMP + H2O = 5-formamido-1-(5-phospho-D-ribosyl)imidazole-4-carboxamide. The protein operates within purine metabolism; IMP biosynthesis via de novo pathway; 5-formamido-1-(5-phospho-D-ribosyl)imidazole-4-carboxamide from 5-amino-1-(5-phospho-D-ribosyl)imidazole-4-carboxamide (10-formyl THF route): step 1/1. Its pathway is purine metabolism; IMP biosynthesis via de novo pathway; IMP from 5-formamido-1-(5-phospho-D-ribosyl)imidazole-4-carboxamide: step 1/1. The sequence is that of Bifunctional purine biosynthesis protein PurH from Clostridium botulinum (strain Langeland / NCTC 10281 / Type F).